The primary structure comprises 860 residues: MYSGAGPALAPPAPPPPPIQGYAFKPPPRPDFGTSGRTIKLQANFFEMDIPKIDIYHYELDIKPEKCPRRVNREIVEHMVQHFKTQIFGDRKPVFDGRKNLYTAMPLPIGRDKVELEVTLPGEGKDRIFKVSIKWVSCVSLQALHDALSGRLPSVPFETIQALDVVMRHLPSMRYTPVGRSFFTASEGCSNPLGGGREVWFGFHQSVRPSLWKMMLNIDVSATAFYKAQPVIEFVCEVLDFKSIEEQQKPLTDSQRVKFTKEIKGLKVEITHCGQMKRKYRVCNVTRRPASHQTFPLQQESGQTVECTVAQYFKDRHKLVLRYPHLPCLQVGQEQKHTYLPLEVCNIVAGQRCIKKLTDNQTSTMIRATARSAPDRQEEISKLMRSASFNTDPYVREFGIMVKDEMTDVTGRVLQPPSILYGGRNKAIATPVQGVWDMRNKQFHTGIEIKVWAIACFAPQRQCTEVHLKSFTEQLRKISRDAGMPIQGQPCFCKYAQGADSVEPMFRHLKNTYAGLQLVVVILPGKTPVYAEVKRVGDTVLGMATQCVQMKNVQRTTPQTLSNLWLKINVKLGGVNNILLPQGRPPVFQQPVIFLGADVTHPPAGDGKKPSIAAVVGSMDAHPNRYCATVRVQQHRQEIIQDLAAMVRELLIQFYKSTRFKPTRIIFYRDGVSEGQFQQVLHHELLAIREACIKLEKDYQPGITFIVVQKRHHTRLFCTDKNERVGKSGNIPAGTTVDTKITHPTEFDFYLCSHAGIQGTSRPSHYHVLWDDNRFSSDELQILTYQLCHTYVRCTRSVSIPAPAYYAHLVAFRARYHLVDKEHDSAEGSHTSGQSNGRDHQALAKAVQVHQDTLRTMYFA.

The segment at 1–30 (MYSGAGPALAPPAPPPPPIQGYAFKPPPRP) is disordered. Residue Y2 is modified to 3'-nitrotyrosine. The span at 9-30 (LAPPAPPPPPIQGYAFKPPPRP) shows a compositional bias: pro residues. Residues 230 to 349 (PVIEFVCEVL…LPLEVCNIVA (120 aa)) enclose the PAZ domain. An interaction with guide RNA region spans residues 312–317 (YFKDRH). Phosphoserine is present on S388. In terms of domain architecture, Piwi spans 518 to 819 (LVVVILPGKT…VAFRARYHLV (302 aa)). The tract at residues 525–567 (GKTPVYAEVKRVGDTVLGMATQCVQMKNVQRTTPQTLSNLWLK) is interaction with guide RNA. The segment at 588 to 591 (FQQP) is interaction with GW182 family members. D598 contacts a divalent metal cation. The segment at 651-661 (LIQFYKSTRFK) is interaction with GW182 family members. D670 is a binding site for a divalent metal cation. Position 701 is a 4-hydroxyproline (P701). Interaction with guide RNA regions lie at residues 710–711 (KR), 754–762 (HAGIQGTSR), and 791–813 (YVRC…VAFR). Residue H808 coordinates a divalent metal cation. Phosphoserine occurs at positions 825, 829, 832, and 835.

This sequence belongs to the argonaute family. Ago subfamily. Interacts with DICER1 through its Piwi domain and with TARBP2 during assembly of the RNA-induced silencing complex (RISC). Together, DICER1, AGO2 and TARBP2 constitute the trimeric RISC loading complex (RLC), or micro-RNA (miRNA) loading complex (miRLC). Within the RLC/miRLC, DICER1 and TARBP2 are required to process precursor miRNAs (pre-miRNAs) to mature miRNAs and then load them onto AGO2. AGO2 bound to the mature miRNA constitutes the minimal RISC and may subsequently dissociate from DICER1 and TARBP2. Note however that the term RISC has also been used to describe the trimeric RLC/miRLC. The formation of RISC complexes containing siRNAs rather than miRNAs appears to occur independently of DICER1. Interacts with AGO1. Also interacts with DDB1, DDX5, DDX6, DDX20, DHX30, DHX36, DDX47, DHX9, ELAVL, FXR1, GEMIN4, HNRNPF, IGF2BP1, ILF3, IMP8, MATR3, PABPC1, PRMT5, P4HA1, P4HB, RBM4, SART3, TNRC6A, TNRC6B, UPF1 and YBX1. Interacts with the P-body components DCP1A and XRN1. Associates with polysomes and messenger ribonucleoproteins (mNRPs). Interacts with RBM4; the interaction is modulated under stress-induced conditions, occurs under both cell proliferation and differentiation conditions and in an RNA- and phosphorylation-independent manner. Interacts with LIMD1, WTIP and AJUBA. Interacts with TRIM71; the interaction increases in presence of RNA. Interacts with APOBEC3G in an RNA-dependent manner. Interacts with APOBEC3A, APOBEC3C, APOBEC3F and APOBEC3H. Interacts with DICER1, TARBP2, EIF6, MOV10 and RPL7A (60S ribosome subunit); they form a large RNA-induced silencing complex (RISC). Interacts with FMR1. Interacts with ZFP36. Interacts with RC3H1; the interaction is RNA independent. Found in a complex composed of AGO2, CHD7 and ARB2A. Interacts with SND1 and SYT11. Interacts with CLNK. Interacts with GARRE1. Interacts with GRB2; this interaction is important for the formation of a ternary complex containing GRB2, AGO2 and DICER1. Requires Mg(2+) as cofactor. Mn(2+) serves as cofactor. In terms of processing, hydroxylated. 4-hydroxylation appears to enhance protein stability but is not required for miRNA-binding or endonuclease activity. Ubiquitinated on surface-exposed lysines by a SCF-like E3 ubiquitin-protein ligase complex containing ZSWIM8 during target-directed microRNA degradation (TDMD), a process that mediates degradation of microRNAs (miRNAs). Ubiquitination by the SCF-like E3 ubiquitin-protein ligase complex containing ZSWIM8 leads to its subsequent degradation, thereby exposing miRNAs for degradation. ZSWIM8 recognizes and binds AGO2 when it is engaged with a TDMD target. Post-translationally, phosphorylation at Ser-388 by AKT3; leads to up-regulate translational repression of microRNA target and down-regulate endonucleolytic cleavage. In terms of processing, a phosphorylation cycle of C-terminal serine cluster (Ser-825-Ser-835) regulates the release of target mRNAs. Target-binding leads to phosphorylation of these residues by CSNK1A1, which reduces the affinity of AGO2 for mRNA and enables target release. The ANKRD52-PPP6C phosphatase complex dephosphorylates the residues, which primes AGO2 for binding a new target.

The protein resides in the cytoplasm. It localises to the P-body. The protein localises to the nucleus. It carries out the reaction Endonucleolytic cleavage to 5'-phosphomonoester.. Its function is as follows. Required for RNA-mediated gene silencing (RNAi) by the RNA-induced silencing complex (RISC). The 'minimal RISC' appears to include AGO2 bound to a short guide RNA such as a microRNA (miRNA) or short interfering RNA (siRNA). These guide RNAs direct RISC to complementary mRNAs that are targets for RISC-mediated gene silencing. The precise mechanism of gene silencing depends on the degree of complementarity between the miRNA or siRNA and its target. Binding of RISC to a perfectly complementary mRNA generally results in silencing due to endonucleolytic cleavage of the mRNA specifically by AGO2. Binding of RISC to a partially complementary mRNA results in silencing through inhibition of translation, and this is independent of endonuclease activity. May inhibit translation initiation by binding to the 7-methylguanosine cap, thereby preventing the recruitment of the translation initiation factor eIF4-E. May also inhibit translation initiation via interaction with EIF6, which itself binds to the 60S ribosomal subunit and prevents its association with the 40S ribosomal subunit. The inhibition of translational initiation leads to the accumulation of the affected mRNA in cytoplasmic processing bodies (P-bodies), where mRNA degradation may subsequently occur. In some cases RISC-mediated translational repression is also observed for miRNAs that perfectly match the 3' untranslated region (3'-UTR). Can also up-regulate the translation of specific mRNAs under certain growth conditions. Binds to the AU element of the 3'-UTR of the TNF (TNF-alpha) mRNA and up-regulates translation under conditions of serum starvation. Also required for transcriptional gene silencing (TGS), in which short RNAs known as antigene RNAs or agRNAs direct the transcriptional repression of complementary promoter regions. This is Protein argonaute-2 (AGO2) from Bos taurus (Bovine).